A 219-amino-acid chain; its full sequence is Large ribosomal subunit protein uL3 (219 aa).

Residues 124–154 form a disordered region; it reads FSGSIKRHNQSEGPKSHGSRYHRRPGSMGPI.

It belongs to the universal ribosomal protein uL3 family. Part of the 50S ribosomal subunit. Forms a cluster with proteins L14 and L19.

In terms of biological role, one of the primary rRNA binding proteins, it binds directly near the 3'-end of the 23S rRNA, where it nucleates assembly of the 50S subunit. This chain is Large ribosomal subunit protein uL3, found in Phytoplasma mali (strain AT).